We begin with the raw amino-acid sequence, 1416 residues long: DNA-directed RNA polymerase subunit beta' (1416 aa).

Positions 71, 73, 86, and 89 each coordinate Zn(2+). Mg(2+) is bound by residues aspartate 461, aspartate 463, and aspartate 465. Residues cysteine 815, cysteine 889, cysteine 896, and cysteine 899 each coordinate Zn(2+).

The protein belongs to the RNA polymerase beta' chain family. In terms of assembly, the RNAP catalytic core consists of 2 alpha, 1 beta, 1 beta' and 1 omega subunit. When a sigma factor is associated with the core the holoenzyme is formed, which can initiate transcription. Mg(2+) is required as a cofactor. Requires Zn(2+) as cofactor.

It catalyses the reaction RNA(n) + a ribonucleoside 5'-triphosphate = RNA(n+1) + diphosphate. Functionally, DNA-dependent RNA polymerase catalyzes the transcription of DNA into RNA using the four ribonucleoside triphosphates as substrates. The sequence is that of DNA-directed RNA polymerase subunit beta' from Haemophilus influenzae (strain PittGG).